Consider the following 351-residue polypeptide: 3-dehydroquinate synthase (351 aa).

NAD(+) is bound by residues 60–65, 94–98, 118–119, K131, K140, and 158–161; these read DGEEYK, GVISD, TT, and FLKT. The Zn(2+) site is built by E173, H239, and H256.

This sequence belongs to the sugar phosphate cyclases superfamily. Dehydroquinate synthase family. Co(2+) is required as a cofactor. Zn(2+) serves as cofactor. Requires NAD(+) as cofactor.

The protein localises to the cytoplasm. The enzyme catalyses 7-phospho-2-dehydro-3-deoxy-D-arabino-heptonate = 3-dehydroquinate + phosphate. It participates in metabolic intermediate biosynthesis; chorismate biosynthesis; chorismate from D-erythrose 4-phosphate and phosphoenolpyruvate: step 2/7. Its function is as follows. Catalyzes the conversion of 3-deoxy-D-arabino-heptulosonate 7-phosphate (DAHP) to dehydroquinate (DHQ). In Campylobacter jejuni subsp. jejuni serotype O:23/36 (strain 81-176), this protein is 3-dehydroquinate synthase.